Consider the following 98-residue polypeptide: ATP synthase subunit c (98 aa).

Helical transmembrane passes span Ala-27–Leu-47 and Ile-73–Val-93.

This sequence belongs to the ATPase C chain family. As to quaternary structure, F-type ATPases have 2 components, F(1) - the catalytic core - and F(0) - the membrane proton channel. F(1) has five subunits: alpha(3), beta(3), gamma(1), delta(1), epsilon(1). F(0) has three main subunits: a(1), b(2) and c(10-14). The alpha and beta chains form an alternating ring which encloses part of the gamma chain. F(1) is attached to F(0) by a central stalk formed by the gamma and epsilon chains, while a peripheral stalk is formed by the delta and b chains.

It localises to the cell inner membrane. Functionally, f(1)F(0) ATP synthase produces ATP from ADP in the presence of a proton or sodium gradient. F-type ATPases consist of two structural domains, F(1) containing the extramembraneous catalytic core and F(0) containing the membrane proton channel, linked together by a central stalk and a peripheral stalk. During catalysis, ATP synthesis in the catalytic domain of F(1) is coupled via a rotary mechanism of the central stalk subunits to proton translocation. In terms of biological role, key component of the F(0) channel; it plays a direct role in translocation across the membrane. A homomeric c-ring of between 10-14 subunits forms the central stalk rotor element with the F(1) delta and epsilon subunits. The chain is ATP synthase subunit c from Protochlamydia amoebophila (strain UWE25).